We begin with the raw amino-acid sequence, 426 residues long: Probable auxin efflux carrier component 9 (426 aa).

At 1 to 6 (MITGSE) the chain is on the extracellular side. The helical transmembrane segment at 7-27 (VYQVVEAMAPLYTAAALGYGS) threads the bilayer. Residues 28 to 38 (VRWLKAFSNEQ) are Cytoplasmic-facing. A helical transmembrane segment spans residues 39 to 59 (CAGINHFVALYAVPVLIFDMV). A (indol-3-yl)acetate-binding site is contributed by V51. The Extracellular portion of the chain corresponds to 60 to 70 (STNNVYKMNGR). The chain crosses the membrane as a helical span at residues 71-91 (LIAADTLQKAVLLLGLMAWAL). Over 92-114 (WERSRARGAGAKAKAAVSSPLQW) the chain is Cytoplasmic. Residues 115-135 (VITCFSVASLPNTIIMGVPLL) form a helical membrane-spanning segment. (indol-3-yl)acetate-binding residues include N126 and I128. The Extracellular portion of the chain corresponds to 136 to 145 (NGMYGPVSKD). Residues 146–166 (LMKQIVVMQFCIWYNVIIFLY) form a helical membrane-spanning segment. (indol-3-yl)acetate is bound at residue Y159. Residues 167–286 (EYMAARRSAS…LLQIPNTYAS (120 aa)) lie on the Cytoplasmic side of the membrane. A disordered region spans residues 232 to 258 (RDGVSGETTAAAKEVSSGEVAPVEEEE). Residues 287–307 (FLGLIWSLIAFKCGFSMPKIV) traverse the membrane as a helical segment. At 308–310 (EDS) the chain is on the extracellular side. A helical transmembrane segment spans residues 311 to 331 (LFTIRTTAVGLSMFSSGTFIA). The Cytoplasmic segment spans residues 332–347 (RQSRFVPCGYKIASFS). A helical membrane pass occupies residues 348 to 368 (MVIKFLIGPVVMLFASLVIGM). Residues 369-371 (HGT) lie on the Extracellular side of the membrane. The chain crosses the membrane as a helical span at residues 372–392 (LLHIAVVQAALPLAVTSFVYA). Residue V386 coordinates (indol-3-yl)acetate. The Cytoplasmic segment spans residues 393–405 (EEYKVHADIMSTG). A helical transmembrane segment spans residues 406–426 (VILGIFISLPVTIVYYILLGL).

Belongs to the auxin efflux carrier (TC 2.A.69.1) family. Homodimer. Expressed in roots, leaves and shoot apex. Expressed in roots, stem bases, stems, leaves and young panicles.

The protein localises to the membrane. Functionally, may act as a component of the auxin efflux carrier. The sequence is that of Probable auxin efflux carrier component 9 from Oryza sativa subsp. japonica (Rice).